Here is a 503-residue protein sequence, read N- to C-terminus: Lysine--tRNA ligase (503 aa).

Residues Glu-413 and Glu-420 each contribute to the Mg(2+) site.

The protein belongs to the class-II aminoacyl-tRNA synthetase family. Homodimer. Mg(2+) is required as a cofactor.

The protein localises to the cytoplasm. It catalyses the reaction tRNA(Lys) + L-lysine + ATP = L-lysyl-tRNA(Lys) + AMP + diphosphate. The polypeptide is Lysine--tRNA ligase (Actinobacillus succinogenes (strain ATCC 55618 / DSM 22257 / CCUG 43843 / 130Z)).